The sequence spans 351 residues: Signal recognition particle receptor FtsY (351 aa).

Residues Gly-156 to Thr-163, Asp-238 to Arg-242, and Thr-302 to Asp-305 each bind GTP.

The protein belongs to the GTP-binding SRP family. FtsY subfamily. Part of the signal recognition particle protein translocation system, which is composed of SRP and FtsY. SRP is a ribonucleoprotein composed of Ffh and a 4.5S RNA molecule.

The protein localises to the cell membrane. It localises to the cytoplasm. It catalyses the reaction GTP + H2O = GDP + phosphate + H(+). Involved in targeting and insertion of nascent membrane proteins into the cytoplasmic membrane. Acts as a receptor for the complex formed by the signal recognition particle (SRP) and the ribosome-nascent chain (RNC). Interaction with SRP-RNC leads to the transfer of the RNC complex to the Sec translocase for insertion into the membrane, the hydrolysis of GTP by both Ffh and FtsY, and the dissociation of the SRP-FtsY complex into the individual components. The polypeptide is Signal recognition particle receptor FtsY (Buchnera aphidicola subsp. Schizaphis graminum (strain Sg)).